A 165-amino-acid polypeptide reads, in one-letter code: Anaerobic nitrite reductase GLB1 (165 aa).

A Globin domain is found at 12–162; sequence VFGEEQEALV…LVAAIKREMK (151 aa). Positions 45–49 match the Homodimerization motif; sequence EIAPS. 6 residues coordinate heme b: Ser-55, Lys-69, His-73, Arg-103, Thr-107, and His-108. Positions 115 to 127 match the Homodimerization motif; sequence DGHFEVTGFALLE.

This sequence belongs to the plant globin family. In terms of assembly, homodimer. It depends on heme b as a cofactor. In embryonic organs and at low levels in vegetative organs.

It localises to the cytoplasm. Its subcellular location is the nucleus. The enzyme catalyses Fe(III)-heme b-[protein] + nitric oxide + H2O = Fe(II)-heme b-[protein] + nitrite + 2 H(+). Phytoglobin that reduces nitrite to nitric oxide (NO) under anoxic conditions (e.g. during flooding or in waterlogged soil). May not function as an oxygen storage or transport protein. Has an unusually high affinity for O(2) through an hexacoordinate heme iron because of a very low dissociation constant. The chain is Anaerobic nitrite reductase GLB1 (HB) from Zea mays (Maize).